The sequence spans 453 residues: Ribosomal protein uS12 methylthiotransferase RimO (453 aa).

One can recognise an MTTase N-terminal domain in the interval 5–120 (PKVGFVSLGC…VMQAVHSHLP (116 aa)). [4Fe-4S] cluster contacts are provided by C14, C50, C79, C151, C155, and C158. One can recognise a Radical SAM core domain in the interval 137 to 382 (LTPRHYAYLK…MEVAEEVSAN (246 aa)). One can recognise a TRAM domain in the interval 385-453 (QRKIGKTLKV…ADGHDLWGEV (69 aa)).

It belongs to the methylthiotransferase family. RimO subfamily. [4Fe-4S] cluster is required as a cofactor.

It is found in the cytoplasm. The enzyme catalyses L-aspartate(89)-[ribosomal protein uS12]-hydrogen + (sulfur carrier)-SH + AH2 + 2 S-adenosyl-L-methionine = 3-methylsulfanyl-L-aspartate(89)-[ribosomal protein uS12]-hydrogen + (sulfur carrier)-H + 5'-deoxyadenosine + L-methionine + A + S-adenosyl-L-homocysteine + 2 H(+). In terms of biological role, catalyzes the methylthiolation of an aspartic acid residue of ribosomal protein uS12. This is Ribosomal protein uS12 methylthiotransferase RimO from Burkholderia orbicola (strain MC0-3).